The following is a 275-amino-acid chain: 3-methyl-2-oxobutanoate hydroxymethyltransferase (275 aa).

Asp44 and Asp83 together coordinate Mg(2+). 3-methyl-2-oxobutanoate-binding positions include 44 to 45 (DS), Asp83, and Lys113. Glu115 contributes to the Mg(2+) binding site. Residue Glu182 is the Proton acceptor of the active site.

Belongs to the PanB family. Homodecamer; pentamer of dimers. It depends on Mg(2+) as a cofactor.

It localises to the cytoplasm. It catalyses the reaction 3-methyl-2-oxobutanoate + (6R)-5,10-methylene-5,6,7,8-tetrahydrofolate + H2O = 2-dehydropantoate + (6S)-5,6,7,8-tetrahydrofolate. The protein operates within cofactor biosynthesis; (R)-pantothenate biosynthesis; (R)-pantoate from 3-methyl-2-oxobutanoate: step 1/2. Functionally, catalyzes the reversible reaction in which hydroxymethyl group from 5,10-methylenetetrahydrofolate is transferred onto alpha-ketoisovalerate to form ketopantoate. The sequence is that of 3-methyl-2-oxobutanoate hydroxymethyltransferase from Clostridium novyi (strain NT).